The following is a 655-amino-acid chain: A-type voltage-gated potassium channel KCND3 (655 aa).

The Cytoplasmic segment spans residues 1–182; sequence MAAGVAAWLP…FENPHTSTLA (182 aa). Interaction with KCNIP1 regions lie at residues 6–21 and 70–78; these read AAWL…GWMP and EKEFFFNED. 4 residues coordinate Zn(2+): histidine 104, cysteine 110, cysteine 131, and cysteine 132. Serine 153 is modified (phosphoserine). A helical membrane pass occupies residues 183-204; the sequence is LVFYYVTGFFIAVSVITNVVET. Residues 205-223 are Extracellular-facing; it reads VPCGTVPGSKELPCGERYS. The chain crosses the membrane as a helical span at residues 224–246; it reads VAFFCLDTACVMIFTVEYLLRLF. Topologically, residues 247–253 are cytoplasmic; that stretch reads AAPSRYR. The chain crosses the membrane as a helical span at residues 254 to 277; it reads FIRSVMSIIDVVAIMPYYIGLVMT. Over 278-283 the chain is Extracellular; it reads NNEDVS. Residues 284–306 traverse the membrane as a helical; Voltage-sensor segment; sequence GAFVTLRVFRVFRIFKFSRHSQG. The Cytoplasmic portion of the chain corresponds to 307–318; it reads LRILGYTLKSCA. Residues 319-343 form a helical membrane-spanning segment; it reads SELGFLLFSLTMAIIIFATVMFYAE. The Extracellular portion of the chain corresponds to 344 to 352; sequence KGSSASKFT. Residues 353–366 constitute an intramembrane region (helical); it reads SIPASFWYTIVTMT. Threonine 367, leucine 368, glycine 369, and tyrosine 370 together coordinate K(+). The Selectivity filter motif lies at 367–372; sequence TLGYGD. An intramembrane segment occupies 367-374; it reads TLGYGDMV. A helical membrane pass occupies residues 378-400; sequence IAGKIFGSICSLSGVLVIALPVP. Residues 401-655 are Cytoplasmic-facing; the sequence is VIVSNFSRIY…TSNVVKVSVL (255 aa). Threonine 459 carries the post-translational modification Phosphothreonine. Positions 470-487 are interaction with KCNIP1 and KCNIP2; sequence SLIESQHHHLLHCLEKTT. The segment at 474-489 is mediates dendritic targeting; it reads SQHHHLLHCLEKTTGL. Residues 523–565 are disordered; the sequence is SSMQNYPSTRSPSLSSHSGLTTTCCSRRSKKTTHLPNSNLPAT. The segment covering 529–548 has biased composition (low complexity); that stretch reads PSTRSPSLSSHSGLTTTCCS. Serine 569 is subject to Phosphoserine; by CaMK2D. A Phosphoserine modification is found at serine 585. The tract at residues 616–647 is disordered; that stretch reads SIPTPPALTPEGESRPPPASPGPNTNIPSITS. Residues 637-647 show a composition bias toward polar residues; sequence GPNTNIPSITS.

This sequence belongs to the potassium channel family. D (Shal) (TC 1.A.1.2) subfamily. Kv4.3/KCND3 sub-subfamily. In terms of assembly, homotetramer. Heterotetramer with KCND2. Associates with the regulatory subunits KCNIP3 and KCNIP4. Interacts with KCNE1, KCNE2, SCN1B and KCNAB1 and DLG1. Component of heteromultimeric potassium channels. Identified in potassium channel complexes containing KCND1, KCND2, KCND3, KCNIP1, KCNIP2, KCNIP3, KCNIP4, DPP6 and DPP10. Interacts with KCNIP1; each KCNIP1 monomer interacts with two adjacent KCND3 subunits, through both the N-terminal inactivation ball of a KCND3 subunit and a C-terminal helix from the adjacent KCND3 subunit, clamping them together; this interaction stabilizes the tetrameric form and modulates the channel gating kinetics namely channel activation and inactivation kinetics and rate of recovery from inactivation. Interacts with DPP6; this interaction modulates the channel gating kinetics namely channel activation and inactivation kinetics and rate of recovery from inactivation. Interacts with KCNIP2; each KCNIP2 monomer interacts with two adjacent KCND3 subunits, through both the N-terminal inactivation ball of a KCND3 subunit and a C-terminal helix from the adjacent KCND3 subunit, clamping them together; this interaction modulates the channel gating kinetics. Post-translationally, regulated through phosphorylation at Ser-569 by CaMK2D. In terms of tissue distribution, highly expressed in brain, in particular in the retrosplenial cortex, medial habenula, anterior thalamus, hippocampus, cerebellum and lateral geniculate and superior colliculus. Highly expressed in heart atrium (at protein level) and throughout the ventricle wall, in lung and vas deferens.

It localises to the cell membrane. Its subcellular location is the sarcolemma. The protein resides in the cell projection. It is found in the dendrite. The catalysed reaction is K(+)(in) = K(+)(out). In terms of biological role, pore-forming (alpha) subunit of voltage-gated A-type potassium channels that mediates transmembrane potassium transport in excitable membranes, in brain and heart. In cardiomyocytes, may generate the transient outward potassium current I(To). In neurons, may conduct the transient subthreshold somatodendritic A-type potassium current (ISA). Kinetics properties are characterized by fast activation at subthreshold membrane potentials, rapid inactivation, and quick recovery from inactivation. Channel properties are modulated by interactions with regulatory subunits. Interaction with the regulatory subunits KCNIP1 or KCNIP2 modulates the channel gating kinetics namely channel activation and inactivation kinetics and rate of recovery from inactivation. Likewise, interaction with DPP6 modulates the channel gating kinetics namely channel activation and inactivation kinetics. The protein is A-type voltage-gated potassium channel KCND3 of Rattus norvegicus (Rat).